The sequence spans 917 residues: Dolichyl-phosphooligosaccharide-protein glycotransferase (917 aa).

The span at 1–10 (MTENNEKVKN) shows a compositional bias: basic and acidic residues. The disordered stretch occupies residues 1-20 (MTENNEKVKNSDSANNQSSK). Topologically, residues 1 to 38 (MTENNEKVKNSDSANNQSSKNSKFNFNFEDKKVKCAKT) are cytoplasmic. Residues 11-20 (SDSANNQSSK) show a composition bias toward low complexity. The helical transmembrane segment at 39–59 (ILIIIFLAFLSFQMRAQTADM) threads the bilayer. At 60–154 (GFTTNEQYLD…AMDSTVTLMN (95 aa)) the chain is on the extracellular side. The DXD motif 1 motif lies at 82 to 84 (ALD). Asp-84 is a Mn(2+) binding site. Residues 155-175 (AAFWVPAILSMFLITPIFFTV) form a helical membrane-spanning segment. Residues 176 to 182 (RRITSSD) lie on the Cytoplasmic side of the membrane. A helical transmembrane segment spans residues 183-203 (IGGAVAAILASLSPSIFVKTV). Over 204-209 (AGFSDT) the chain is Extracellular. Mn(2+) is bound at residue Asp-208. The DXD motif 2 motif lies at 208-210 (DTP). Residues 210–230 (PILEILPLLFIVWFIIEAIHY) form a helical membrane-spanning segment. At 231 to 237 (SKEKNYK) the chain is on the cytoplasmic side. The chain crosses the membrane as a helical span at residues 238-260 (SLIYGLLATLMLALYPFMWSAWW). At 261-263 (YGY) the chain is on the extracellular side. A helical transmembrane segment spans residues 264–286 (YIVIAFLVIYAIYKGISYNSIAK). Topologically, residues 287-308 (YTKSKNNNHKDKIESEKLEMLN) are cytoplasmic. A helical transmembrane segment spans residues 309–329 (ILKISGLFIIGGAVLITALYG). Residues 330 to 372 (VSTTMNALQAPLNYLGLDEVSSQTGWPNVLTTVSELDTASLDE) are Extracellular-facing. A TIXE motif motif is present at residues 361–364 (TVSE). Glu-364 serves as a coordination point for Mn(2+). A helical transmembrane segment spans residues 373 to 393 (IISSSLGSIHLFAIGLIGIFL). The Cytoplasmic segment spans residues 394–413 (SLFRKVLTPVKQISNGLAEK). A helical membrane pass occupies residues 414 to 434 (LDIKYALLLIIWFAVTFLAAS). Residues 435-438 (KGVR) are Extracellular-facing. Arg-438 serves as a coordination point for a glycophospholipid. The chain crosses the membrane as a helical span at residues 439–459 (FVALMVPPLSIGVGIFVGFIE). Topologically, residues 460–469 (QFIKNNLDKK) are cytoplasmic. Residues 470-490 (YEYVAYPTIAIIVLYALFTIY) traverse the membrane as a helical segment. Topologically, residues 491-506 (RADSADLVRMLLPSNY) are extracellular. A helical membrane pass occupies residues 507–527 (VPIAEGIMLASLAVLIIYKVA). Over 528–541 (ELIAESNKKLVMNK) the chain is Cytoplasmic. A helical membrane pass occupies residues 542–562 (IFMILLAIGLITPTIATIVPF). Topologically, residues 563–917 (YSVPTYNDGW…FSVDYGNYSK (355 aa)) are extracellular. An interacts with target acceptor peptide in protein substrate region spans residues 592–594 (WWD). The WWDYG motif signature appears at 592-596 (WWDNG). Positions 719-726 (MTSIASVW) match the MI motif motif.

Belongs to the STT3 family. It depends on Mn(2+) as a cofactor. Mg(2+) serves as cofactor.

Its subcellular location is the cell membrane. The catalysed reaction is an archaeal dolichyl phosphooligosaccharide + [protein]-L-asparagine = an archaeal dolichyl phosphate + a glycoprotein with the oligosaccharide chain attached by N-beta-D-glycosyl linkage to a protein L-asparagine.. It functions in the pathway cell surface structure biogenesis; S-layer biogenesis. The protein operates within protein modification; protein glycosylation. In terms of biological role, oligosaccharyl transferase (OST) that catalyzes the initial transfer of a defined glycan (ManNAcGlc-2,3-diNAcAGlcNAc in M.voltae) from the lipid carrier dolichol-monophosphate to an asparagine residue within an Asn-X-Ser/Thr consensus motif in nascent polypeptide chains, the first step in protein N-glycosylation. Involved in the assembly of an N-linked disaccharide that decorates the S-layer glycoprotein and flagellins. The chain is Dolichyl-phosphooligosaccharide-protein glycotransferase from Methanococcus voltae.